The primary structure comprises 85 residues: Large ribosomal subunit protein bL27 (85 aa).

A disordered region spans residues 1 to 20 (MAHKKAGGSTRNGRDSEAKR).

Belongs to the bacterial ribosomal protein bL27 family.

The polypeptide is Large ribosomal subunit protein bL27 (Serratia proteamaculans (strain 568)).